Consider the following 133-residue polypeptide: MAGGQRLKRMADSVQRELSELIRQELKDPRLGGLVTISGVKVSPDLGYADVYVTVMGRELSDDQNEVAHRETLDILNKASGFLRQELSRRIKTRITPRLRFHYDKTNAYGNYMFGLIEKAVQDLPKRESDDEE.

Belongs to the RbfA family. In terms of assembly, monomer. Binds 30S ribosomal subunits, but not 50S ribosomal subunits or 70S ribosomes.

Its subcellular location is the cytoplasm. One of several proteins that assist in the late maturation steps of the functional core of the 30S ribosomal subunit. Associates with free 30S ribosomal subunits (but not with 30S subunits that are part of 70S ribosomes or polysomes). Required for efficient processing of 16S rRNA. May interact with the 5'-terminal helix region of 16S rRNA. In Acinetobacter baumannii (strain AB307-0294), this protein is Ribosome-binding factor A.